Consider the following 374-residue polypeptide: Tetraacyldisaccharide 4'-kinase (374 aa).

43–50 (TMGGTGKT) is a binding site for ATP.

It belongs to the LpxK family.

It carries out the reaction a lipid A disaccharide + ATP = a lipid IVA + ADP + H(+). The protein operates within glycolipid biosynthesis; lipid IV(A) biosynthesis; lipid IV(A) from (3R)-3-hydroxytetradecanoyl-[acyl-carrier-protein] and UDP-N-acetyl-alpha-D-glucosamine: step 6/6. Its function is as follows. Transfers the gamma-phosphate of ATP to the 4'-position of a tetraacyldisaccharide 1-phosphate intermediate (termed DS-1-P) to form tetraacyldisaccharide 1,4'-bis-phosphate (lipid IVA). This is Tetraacyldisaccharide 4'-kinase from Leptospira biflexa serovar Patoc (strain Patoc 1 / Ames).